The primary structure comprises 495 residues: Aspartyl/glutamyl-tRNA(Asn/Gln) amidotransferase subunit B (495 aa).

It belongs to the GatB/GatE family. GatB subfamily. In terms of assembly, heterotrimer of A, B and C subunits.

It catalyses the reaction L-glutamyl-tRNA(Gln) + L-glutamine + ATP + H2O = L-glutaminyl-tRNA(Gln) + L-glutamate + ADP + phosphate + H(+). The enzyme catalyses L-aspartyl-tRNA(Asn) + L-glutamine + ATP + H2O = L-asparaginyl-tRNA(Asn) + L-glutamate + ADP + phosphate + 2 H(+). In terms of biological role, allows the formation of correctly charged Asn-tRNA(Asn) or Gln-tRNA(Gln) through the transamidation of misacylated Asp-tRNA(Asn) or Glu-tRNA(Gln) in organisms which lack either or both of asparaginyl-tRNA or glutaminyl-tRNA synthetases. The reaction takes place in the presence of glutamine and ATP through an activated phospho-Asp-tRNA(Asn) or phospho-Glu-tRNA(Gln). The chain is Aspartyl/glutamyl-tRNA(Asn/Gln) amidotransferase subunit B from Methanosarcina mazei (strain ATCC BAA-159 / DSM 3647 / Goe1 / Go1 / JCM 11833 / OCM 88) (Methanosarcina frisia).